Consider the following 339-residue polypeptide: Anthranilate phosphoribosyltransferase (339 aa).

5-phospho-alpha-D-ribose 1-diphosphate-binding positions include G80, 83–84, T88, 90–93, 108–116, and S120; these read GD, NIST, and KHGNRSVSS. Position 80 (G80) interacts with anthranilate. Position 92 (S92) interacts with Mg(2+). N111 provides a ligand contact to anthranilate. R166 serves as a coordination point for anthranilate. Positions 225 and 226 each coordinate Mg(2+).

Belongs to the anthranilate phosphoribosyltransferase family. As to quaternary structure, homodimer. The cofactor is Mg(2+).

It carries out the reaction N-(5-phospho-beta-D-ribosyl)anthranilate + diphosphate = 5-phospho-alpha-D-ribose 1-diphosphate + anthranilate. It participates in amino-acid biosynthesis; L-tryptophan biosynthesis; L-tryptophan from chorismate: step 2/5. Functionally, catalyzes the transfer of the phosphoribosyl group of 5-phosphorylribose-1-pyrophosphate (PRPP) to anthranilate to yield N-(5'-phosphoribosyl)-anthranilate (PRA). The chain is Anthranilate phosphoribosyltransferase from Moorella thermoacetica (strain ATCC 39073 / JCM 9320).